The following is a 127-amino-acid chain: Large ribosomal subunit protein eL8 (127 aa).

Belongs to the eukaryotic ribosomal protein eL8 family. Part of the 50S ribosomal subunit. Component of box C/D small ribonucleoprotein (sRNP) particles that contain rpl7ae, FlpA and nop5, plus a guide RNA. These sRNP particles form homodimers, giving rise to an asymmetric holoenzyme. Probably part of the RNase P complex.

It is found in the cytoplasm. In terms of biological role, multifunctional RNA-binding protein that recognizes the K-turn motif in ribosomal RNA, the RNA component of RNase P, box H/ACA, box C/D and box C'/D' sRNAs. In Saccharolobus solfataricus (strain ATCC 35092 / DSM 1617 / JCM 11322 / P2) (Sulfolobus solfataricus), this protein is Large ribosomal subunit protein eL8.